We begin with the raw amino-acid sequence, 338 residues long: MADTAPQLKRKREQEAEEAETPSTEEKEAGVGNGTSAPVRLPFSGFRVQKVLRESARDKIIFLHGKVNEDSGDTHGEDAVVILEKTPFQVEHVAQLLTGSPELKLQFSNDIYSTYNLFPPRHLSDIKTTVVYPATEKHLQKYMRQDLRLIRETGDDYRTITLPYLESQSLSIQWVYNILDKKAEADRIVFENPDPSDGFVLIPDLKWNQQQLDDLYLIAICHRRGIRSLRDLTPEHLPLLRNILREGQEAILKRYQVTGDRLRVYLHYLPSYYHLHVHFTALGFEAPGSGVERAHLLAQVIENLECDPKHYQQRTLTFALRTDDPLLQLLQKAQQERN.

Positions 1–36 (MADTAPQLKRKREQEAEEAETPSTEEKEAGVGNGTS) are disordered. Residue alanine 2 is modified to N-acetylalanine. The short motif at 9-12 (KRKR) is the nuclear localization signal (NLS) element. 2 positions are modified to phosphoserine: serine 23 and serine 100. Residues lysine 137 and lysine 141 each carry the N6-acetyllysine modification. The nuclear export sequence (NES) motif lies at 141–153 (KYMRQDLRLIRET). Substrate-binding positions include tryptophan 174, glutamate 184, aspartate 204, lysine 206, and 267–278 (HYLPSYYHLHVH). A Histidine triad motif motif is present at residues 274–278 (HLHVH). Residue histidine 276 is the Nucleophile of the active site.

This sequence belongs to the HIT family. As to quaternary structure, homodimer. Associates with components of the exosome multienzyme ribonuclease complex, such as EXOSC3 and EXOSC4. Interacts with NDOR1.

It is found in the cytoplasm. The protein resides in the nucleus. The enzyme catalyses a 5'-end (N(7)-methyl 5'-triphosphoguanosine)-ribonucleoside in mRNA + H2O = N(7)-methyl-GMP + a 5'-end diphospho-ribonucleoside in mRNA + 2 H(+). The hydrolytic product 7-methylguanosine diphosphate (m7GDP) efficiently inhibits the decapping scavenger activity and acts as a competitive inhibitor in vitro. Inhibited by 2,4-diaminoquinazoline. Functionally, decapping scavenger enzyme that catalyzes the cleavage of a residual cap structure following the degradation of mRNAs by the 3'-&gt;5' exosome-mediated mRNA decay pathway. Hydrolyzes cap analog structures like 7-methylguanosine nucleoside triphosphate (m7GpppG) with up to 10 nucleotide substrates (small capped oligoribonucleotides) and specifically releases 5'-phosphorylated RNA fragments and 7-methylguanosine monophosphate (m7GMP). Cleaves cap analog structures like tri-methyl guanosine nucleoside triphosphate (m3(2,2,7)GpppG) with very poor efficiency. Does not hydrolyze unmethylated cap analog (GpppG) and shows no decapping activity on intact m7GpppG-capped mRNA molecules longer than 25 nucleotides. Does not hydrolyze 7-methylguanosine diphosphate (m7GDP) to m7GMP. May also play a role in the 5'-&gt;3 mRNA decay pathway; m7GDP, the downstream product released by the 5'-&gt;3' mRNA mediated decapping activity, may be also converted by DCPS to m7GMP. Binds to m7GpppG and strongly to m7GDP. Plays a role in first intron splicing of pre-mRNAs. Inhibits activation-induced cell death. This is m7GpppX diphosphatase (Dcps) from Mus musculus (Mouse).